The primary structure comprises 300 residues: Eukaryotic translation initiation factor 3 subunit F (300 aa).

Residues 33–169 form the MPN domain; sequence VKVHPVALFS…VQCYVSALLG (137 aa).

Belongs to the eIF-3 subunit F family. In terms of assembly, component of the eukaryotic translation initiation factor 3 (eIF-3) complex.

Its subcellular location is the cytoplasm. Component of the eukaryotic translation initiation factor 3 (eIF-3) complex, which is involved in protein synthesis of a specialized repertoire of mRNAs and, together with other initiation factors, stimulates binding of mRNA and methionyl-tRNAi to the 40S ribosome. The eIF-3 complex specifically targets and initiates translation of a subset of mRNAs involved in cell proliferation. This Malassezia globosa (strain ATCC MYA-4612 / CBS 7966) (Dandruff-associated fungus) protein is Eukaryotic translation initiation factor 3 subunit F.